The following is a 248-amino-acid chain: Large ribosomal subunit protein uL29m (248 aa).

Disordered stretches follow at residues 77–107 (VSKY…GFFG) and 223–248 (AYEP…PPSS).

This sequence belongs to the universal ribosomal protein uL29 family. In terms of assembly, component of the mitochondrial large ribosomal subunit. Mature mitochondrial ribosomes consist of a small (37S) and a large (54S) subunit. The 37S subunit contains at least 33 different proteins and 1 molecule of RNA (15S). The 54S subunit contains at least 45 different proteins and 1 molecule of RNA (21S).

It localises to the mitochondrion. This chain is Large ribosomal subunit protein uL29m (MRPL4), found in Ajellomyces capsulatus (strain NAm1 / WU24) (Darling's disease fungus).